Consider the following 236-residue polypeptide: MTKRYWNINLEEMMGAGVHFGHGTRKWNPQIAPFISAKRKGIHITNLTRTARFLSEACDLVFDAARRGKKFLIVGTNNKAAYSVARASRKARCHYVNKKWLAGMLTNWSTTETRLNKFRDLRMEQKKGGLNHLPKRDATMFKRQLARLQTYLGGIQYMTGLPDIVIIVDQHKEYTALRECITLGIPTICLIDTNCDPNLSDISIPANDDAISSIRFILNKLVFAICEGRFSYLRSP.

This sequence belongs to the universal ribosomal protein uS2 family.

The protein resides in the plastid. The polypeptide is Small ribosomal subunit protein uS2c (rps2) (Cuscuta exaltata (Tall dodder)).